Here is a 287-residue protein sequence, read N- to C-terminus: Bifunctional protein FolD (287 aa).

Residues 171 to 173 (GHS) and I237 contribute to the NADP(+) site.

The protein belongs to the tetrahydrofolate dehydrogenase/cyclohydrolase family. Homodimer.

The enzyme catalyses (6R)-5,10-methylene-5,6,7,8-tetrahydrofolate + NADP(+) = (6R)-5,10-methenyltetrahydrofolate + NADPH. It catalyses the reaction (6R)-5,10-methenyltetrahydrofolate + H2O = (6R)-10-formyltetrahydrofolate + H(+). Its pathway is one-carbon metabolism; tetrahydrofolate interconversion. Catalyzes the oxidation of 5,10-methylenetetrahydrofolate to 5,10-methenyltetrahydrofolate and then the hydrolysis of 5,10-methenyltetrahydrofolate to 10-formyltetrahydrofolate. The sequence is that of Bifunctional protein FolD from Methanosarcina barkeri (strain Fusaro / DSM 804).